A 474-amino-acid polypeptide reads, in one-letter code: Coiled-coil domain-containing protein 149 (474 aa).

Coiled-coil stretches lie at residues 1–199 (MANQ…RKNS) and 259–286 (IQHQ…LEVS). Disordered regions lie at residues 301–388 (SDPT…EEEV) and 405–474 (AELE…TVKT). Residues 323 to 337 (TENKADPKDGEAQKQ) are compositionally biased toward basic and acidic residues. A compositionally biased stretch (low complexity) spans 343 to 353 (CAAAEALTAPE). Residues 385-414 (EEEVNSLGREIIKLTKEQAAAELEEVRRES) adopt a coiled-coil conformation.

The protein belongs to the CCDC149 family.

The sequence is that of Coiled-coil domain-containing protein 149 (CCDC149) from Homo sapiens (Human).